A 151-amino-acid chain; its full sequence is UPF0178 protein Caul_3070 (151 aa).

The protein belongs to the UPF0178 family.

This chain is UPF0178 protein Caul_3070, found in Caulobacter sp. (strain K31).